Reading from the N-terminus, the 142-residue chain is Augurin-A (142 aa).

An N-terminal signal peptide occupies residues 1–28 (MLSEKFHLRLLTLLTLLTALSLTDVASE). 2 propeptides span residues 29-66 (SKLEKLLMKRVDRDVKPAAAVAVSPSKAKEFLTSLKRP) and 127-142 (GAASYRHGANVNYDYY).

The protein belongs to the augurin family.

It localises to the secreted. It is found in the cytoplasm. The protein localises to the apical cell membrane. Probable hormone. Required for the proper formation of the central nervous system by attenuating cell proliferation during development. The polypeptide is Augurin-A (Danio rerio (Zebrafish)).